The chain runs to 164 residues: Mineralocorticoid receptor (164 aa).

Residues 1-162 form the NR LBD domain; the sequence is QYSWMCLSSF…EFPRCWWRSS (162 aa). R15 and T143 together coordinate 21-hydroxyprogesterone. Aldosterone contacts are provided by R15 and T143. 2 residues coordinate progesterone: R15 and T143.

Belongs to the nuclear hormone receptor family. NR3 subfamily. As to quaternary structure, heteromultimeric cytoplasmic complex with HSP90, HSP70, and FKBP4, in the absence of ligand. After ligand binding, it translocates to the nucleus and binds to DNA as a homodimer and as a heterodimer with NR3C1. Binds the coactivator NCOA2. May interact with HSD11B2 in the absence of ligand. Binds the coactivators NCOA1, TIF1 and NRIP1. Post-translationally, phosphorylated.

The protein localises to the cytoplasm. Its subcellular location is the nucleus. The protein resides in the endoplasmic reticulum membrane. Its function is as follows. Receptor for both mineralocorticoids (MC) such as aldosterone and glucocorticoids (GC) such as corticosterone or cortisol. Binds to mineralocorticoid response elements (MRE) and transactivates target genes. The effect of MC is to increase ion and water transport and thus raise extracellular fluid volume and blood pressure and lower potassium levels. The sequence is that of Mineralocorticoid receptor (NR3C2) from Sus scrofa (Pig).